The sequence spans 78 residues: U23-theraphotoxin-Cg1a 1 (78 aa).

Residues Met-1–Ala-21 form the signal peptide. The propeptide occupies Ser-22–Arg-49. Disulfide bonds link Cys-50–Cys-64, Cys-57–Cys-69, and Cys-63–Cys-75.

This sequence belongs to the neurotoxin 10 (Hwtx-1) family. 64 (Jztx-20) subfamily. Expressed by the venom gland.

It localises to the secreted. Functionally, probable ion channel inhibitor. This Chilobrachys guangxiensis (Chinese earth tiger tarantula) protein is U23-theraphotoxin-Cg1a 1.